The following is a 65-amino-acid chain: Large ribosomal subunit protein bL28 (65 aa).

Residues 1-21 (MAKKDQLTLRGPLYGNNRSHS) are disordered.

This sequence belongs to the bacterial ribosomal protein bL28 family.

The protein is Large ribosomal subunit protein bL28 of Mycoplasma pneumoniae (strain ATCC 29342 / M129 / Subtype 1) (Mycoplasmoides pneumoniae).